Here is a 1036-residue protein sequence, read N- to C-terminus: Isoleucine--tRNA ligase (1036 aa).

A 'HIGH' region motif is present at residues 46–56 (PFATGLPHYGH). Residues 589–593 (KMSKR) carry the 'KMSKS' region motif. Residue K592 participates in ATP binding.

It belongs to the class-I aminoacyl-tRNA synthetase family. IleS type 2 subfamily. Monomer. Zn(2+) is required as a cofactor.

It is found in the cytoplasm. It carries out the reaction tRNA(Ile) + L-isoleucine + ATP = L-isoleucyl-tRNA(Ile) + AMP + diphosphate. Functionally, catalyzes the attachment of isoleucine to tRNA(Ile). As IleRS can inadvertently accommodate and process structurally similar amino acids such as valine, to avoid such errors it has two additional distinct tRNA(Ile)-dependent editing activities. One activity is designated as 'pretransfer' editing and involves the hydrolysis of activated Val-AMP. The other activity is designated 'posttransfer' editing and involves deacylation of mischarged Val-tRNA(Ile). The polypeptide is Isoleucine--tRNA ligase (Chlamydia trachomatis serovar L2 (strain ATCC VR-902B / DSM 19102 / 434/Bu)).